The chain runs to 62 residues: Large ribosomal subunit protein uL29 (62 aa).

Belongs to the universal ribosomal protein uL29 family.

This Cytophaga hutchinsonii (strain ATCC 33406 / DSM 1761 / CIP 103989 / NBRC 15051 / NCIMB 9469 / D465) protein is Large ribosomal subunit protein uL29.